Reading from the N-terminus, the 114-residue chain is Probable gas vesicle protein J2 (114 aa).

Over residues 1–10 (MTDLDHRYPG) the composition is skewed to basic and acidic residues. The segment at 1–21 (MTDLDHRYPGEETEPYGPPSG) is disordered.

The protein belongs to the gas vesicle GvpA family. As to quaternary structure, interacts with GvpA.

Its subcellular location is the gas vesicle. Functionally, a minor component of the gas vesicle, might be involved in nucleating gas vesicle formation. Gas vesicles (GV) are hollow, gas filled proteinaceous nanostructures. It is not clear what function GVs perform in soil bacteria. The polypeptide is Probable gas vesicle protein J2 (Streptomyces coelicolor (strain ATCC BAA-471 / A3(2) / M145)).